The following is a 320-amino-acid chain: Malate dehydrogenase (320 aa).

Residues 10–15 (GAGQIG) and Asp34 each bind NAD(+). Residues Arg83 and Arg89 each coordinate substrate. NAD(+)-binding positions include Asn96 and 119–121 (ITN). Substrate is bound by residues Asn121 and Arg152. His176 (proton acceptor) is an active-site residue.

It belongs to the LDH/MDH superfamily. MDH type 3 family.

It carries out the reaction (S)-malate + NAD(+) = oxaloacetate + NADH + H(+). Functionally, catalyzes the reversible oxidation of malate to oxaloacetate. This is Malate dehydrogenase from Cereibacter sphaeroides (strain ATCC 17025 / ATH 2.4.3) (Rhodobacter sphaeroides).